Here is a 482-residue protein sequence, read N- to C-terminus: ATP-dependent rRNA helicase rrp3 (482 aa).

The segment at 1-55 (MSSVKRRKTEKNTSSGLKSKQAKEPKEASPLSSPEPTEENQNNEIEEGTEEEEVT) is disordered. A compositionally biased stretch (acidic residues) spans 44–53 (EIEEGTEEEE). Residues 56–84 (KSFKDLGIVDSLCEACDTLGYKAPTPIQR) carry the Q motif motif. The Helicase ATP-binding domain occupies 87 to 258 (IPLALQGRDL…RASLKDPLRV (172 aa)). 100–107 (AETGSGKT) lines the ATP pocket. Residues 206–209 (DEAD) carry the DEAD box motif. The region spanning 282-430 (HKDTYLIYLL…EYQTVKDEVM (149 aa)) is the Helicase C-terminal domain. Composition is skewed to basic and acidic residues over residues 444–456 (RNEM…DRGK) and 472–482 (RGRDEMDREEG). Positions 444 to 482 (RNEMKNLHEDRGKKGAVLKGRRPANGAKRGRDEMDREEG) are disordered.

The protein belongs to the DEAD box helicase family. DDX47/RRP3 subfamily. As to quaternary structure, interacts with the SSU processome.

The protein resides in the nucleus. It carries out the reaction ATP + H2O = ADP + phosphate + H(+). Functionally, ATP-dependent rRNA helicase required for pre-ribosomal RNA processing. Involved in the maturation of the 35S-pre-rRNA and to its cleavage to mature 18S rRNA. The polypeptide is ATP-dependent rRNA helicase rrp3 (Sclerotinia sclerotiorum (strain ATCC 18683 / 1980 / Ss-1) (White mold)).